Here is a 288-residue protein sequence, read N- to C-terminus: Energy-coupling factor transporter ATP-binding protein EcfA2 (288 aa).

An ABC transporter domain is found at Ile-3–Ser-246. Gly-40–Ser-47 provides a ligand contact to ATP.

It belongs to the ABC transporter superfamily. Energy-coupling factor EcfA family. In terms of assembly, forms a stable energy-coupling factor (ECF) transporter complex composed of 2 membrane-embedded substrate-binding proteins (S component), 2 ATP-binding proteins (A component) and 2 transmembrane proteins (T component).

The protein resides in the cell membrane. ATP-binding (A) component of a common energy-coupling factor (ECF) ABC-transporter complex. Unlike classic ABC transporters this ECF transporter provides the energy necessary to transport a number of different substrates. This is Energy-coupling factor transporter ATP-binding protein EcfA2 from Listeria innocua serovar 6a (strain ATCC BAA-680 / CLIP 11262).